A 294-amino-acid polypeptide reads, in one-letter code: Non-selective voltage-gated ion channel VDAC2 (294 aa).

A2 bears the N-acetylalanine mark. K23 and K31 together coordinate ATP. N6-acetyllysine; alternate is present on K31. Position 31 is an N6-succinyllysine; alternate (K31). A Glycyl lysine isopeptide (Lys-Gly) (interchain with G-Cter in ubiquitin); alternate cross-link involves residue K31. 2 beta stranded membrane passes run 37–46 (LVKLDVKTKS) and 50–58 (VEFSTSGSS). Residue K64 forms a Glycyl lysine isopeptide (Lys-Gly) (interchain with G-Cter in ubiquitin) linkage. The chain crosses the membrane as a beta stranded span at residues 65 to 75 (VTGTLETKYKW). Phosphotyrosine is present on Y78. 3 beta stranded membrane passes run 80 to 87 (LTFTEKWN), 91 to 100 (TLGTEIAIED), and 106 to 115 (LKLTFDTTFS). The residue at position 118 (T118) is a Phosphothreonine. An N6-acetyllysine; alternate modification is found at K120. K120 is covalently cross-linked (Glycyl lysine isopeptide (Lys-Gly) (interchain with G-Cter in ubiquitin); alternate). A Glycyl lysine isopeptide (Lys-Gly) (interchain with G-Cter in ubiquitin) cross-link involves residue K121. 4 beta stranded membrane passes run 122–131 (SGKIKSSYKR), 134–141 (INLGCDVD), 148–156 (AIHGSAVFG), and 161–169 (LAGYQMTFD). K172 is covalently cross-linked (Glycyl lysine isopeptide (Lys-Gly) (interchain with G-Cter in ubiquitin)). 6 consecutive transmembrane segments (beta stranded) span residues 174-186 (KLTRNNFAVGYRT), 189-196 (FQLHTNVN), 200-209 (EFGGSIYQKV), 213-222 (LDTSVNLAWT), 229-238 (RFGIAAKYQL), and 242-249 (ASISAKVN). S251 carries the post-translational modification Phosphoserine. Residues 253–255 (LIG) and 271–275 (SALVD) contribute to the NAD(+) site. Beta stranded transmembrane passes span 253–262 (LIGVGYTQTL) and 265–274 (GVKLTLSALV). Residue K277 is modified to N6-acetyllysine; alternate. A Glycyl lysine isopeptide (Lys-Gly) (interchain with G-Cter in ubiquitin); alternate cross-link involves residue K277. The chain crosses the membrane as a beta stranded span at residues 284-293 (HKLGLALELE).

The protein belongs to the eukaryotic mitochondrial porin family. As to quaternary structure, monomer, homodimer and higher order oligomers; formation of higher order structures is necessary for scramblase activity. Interacts with ARMC12 in a TBC1D21-dependent manner. Interacts with KLC3. Interacts with SPATA33. Interacts with PPP3CC in a SPATA33-dependent manner. In terms of processing, ubiquitinated by PRKN during mitophagy, leading to its degradation and enhancement of mitophagy. Deubiquitinated by USP30.

It localises to the mitochondrion outer membrane. The protein resides in the membrane. The enzyme catalyses chloride(in) = chloride(out). It catalyses the reaction K(+)(in) = K(+)(out). It carries out the reaction a 1,2-diacyl-sn-glycero-3-phospho-L-serine(in) = a 1,2-diacyl-sn-glycero-3-phospho-L-serine(out). The catalysed reaction is a 1,2-diacyl-sn-glycero-3-phosphocholine(in) = a 1,2-diacyl-sn-glycero-3-phosphocholine(out). The enzyme catalyses a 1,2-diacyl-sn-glycero-3-phospho-(1D-myo-inositol)(in) = a 1,2-diacyl-sn-glycero-3-phospho-(1D-myo-inositol)(out). Non-selective voltage-gated ion channel that mediates the transport of anions and cations through the mitochondrion outer membrane and plasma membrane. The channel adopts an open conformation at zero mV and a closed conformation at both positive and negative potentials. There are two populations of channels; the main that functions in a lower open-state conductance with lower ion selectivity, that switch, in a voltage-dependent manner, from the open to a low-conducting 'closed' state and the other that has a normal ion selectivity in the typical high conductance, 'open' state. Binds various lipids, including the sphingolipid ceramide, the phospholipid phosphatidylcholine, and the sterols cholesterol and oxysterol. Binding of ceramide promotes the mitochondrial outer membrane permeabilization (MOMP) apoptotic pathway. Functionally, catalyzes the scrambling of phospholipids across the outer mitochondrial membrane; the mechanism is unrelated to channel activity and is capable of translocating both anionic and zwitterionic phospholipids. The polypeptide is Non-selective voltage-gated ion channel VDAC2 (Oryctolagus cuniculus (Rabbit)).